The sequence spans 427 residues: Serine--tRNA ligase (427 aa).

L-serine is bound at residue 228 to 230; that stretch reads TSE. 259 to 261 contributes to the ATP binding site; the sequence is RSE. Glu-282 contributes to the L-serine binding site. 346–349 contributes to the ATP binding site; it reads EISS. L-serine is bound at residue Ser-384.

It belongs to the class-II aminoacyl-tRNA synthetase family. Type-1 seryl-tRNA synthetase subfamily. As to quaternary structure, homodimer. The tRNA molecule binds across the dimer.

Its subcellular location is the cytoplasm. It carries out the reaction tRNA(Ser) + L-serine + ATP = L-seryl-tRNA(Ser) + AMP + diphosphate + H(+). The enzyme catalyses tRNA(Sec) + L-serine + ATP = L-seryl-tRNA(Sec) + AMP + diphosphate + H(+). The protein operates within aminoacyl-tRNA biosynthesis; selenocysteinyl-tRNA(Sec) biosynthesis; L-seryl-tRNA(Sec) from L-serine and tRNA(Sec): step 1/1. Catalyzes the attachment of serine to tRNA(Ser). Is also able to aminoacylate tRNA(Sec) with serine, to form the misacylated tRNA L-seryl-tRNA(Sec), which will be further converted into selenocysteinyl-tRNA(Sec). The sequence is that of Serine--tRNA ligase from Ehrlichia ruminantium (strain Welgevonden).